Here is a 61-residue protein sequence, read N- to C-terminus: Overexpressed in colon carcinoma 1 protein homolog (61 aa).

The segment covering 1–13 has biased composition (polar residues); the sequence is MGCGNSTAASTTP. The disordered stretch occupies residues 1-61; that stretch reads MGCGNSTAAS…AGQTASTHKE (61 aa). Over residues 18–34 the composition is skewed to basic and acidic residues; the sequence is SAKDVQDDSSMDEEKRR. Polar residues predominate over residues 48 to 61; it reads TNETAGQTASTHKE.

Belongs to the OCC1 family.

The sequence is that of Overexpressed in colon carcinoma 1 protein homolog (si:dkey-261e22.4) from Danio rerio (Zebrafish).